A 341-amino-acid polypeptide reads, in one-letter code: Tubulin beta chain (341 aa).

GTP contacts are provided by Ser64, Gly68, Thr69, Gly70, Asn130, and Asn152.

This sequence belongs to the tubulin family. In terms of assembly, dimer of alpha and beta chains. A typical microtubule is a hollow water-filled tube with an outer diameter of 25 nm and an inner diameter of 15 nM. Alpha-beta heterodimers associate head-to-tail to form protofilaments running lengthwise along the microtubule wall with the beta-tubulin subunit facing the microtubule plus end conferring a structural polarity. Microtubules usually have 13 protofilaments but different protofilament numbers can be found in some organisms and specialized cells. Mg(2+) is required as a cofactor.

Its subcellular location is the cytoplasm. It is found in the cytoskeleton. Its function is as follows. Tubulin is the major constituent of microtubules, a cylinder consisting of laterally associated linear protofilaments composed of alpha- and beta-tubulin heterodimers. Microtubules grow by the addition of GTP-tubulin dimers to the microtubule end, where a stabilizing cap forms. Below the cap, tubulin dimers are in GDP-bound state, owing to GTPase activity of alpha-tubulin. In Haliotis discus (Abalone), this protein is Tubulin beta chain.